The sequence spans 449 residues: Putative cytochrome P450 135A1 (449 aa).

Residue Cys-383 participates in heme binding.

It belongs to the cytochrome P450 family. It depends on heme as a cofactor.

This is Putative cytochrome P450 135A1 (cyp135A1) from Mycobacterium tuberculosis (strain CDC 1551 / Oshkosh).